The following is a 388-amino-acid chain: Succinate--CoA ligase [ADP-forming] subunit beta (388 aa).

The region spanning 9-244 is the ATP-grasp domain; it reads KQLFAEYGLP…PSQEDEREAH (236 aa). Residues lysine 46, 53–55, glutamate 99, serine 102, and glutamate 107 contribute to the ATP site; that span reads GRG. Residues asparagine 199 and aspartate 213 each contribute to the Mg(2+) site. Residues asparagine 264 and 321-323 contribute to the substrate site; that span reads GIV.

It belongs to the succinate/malate CoA ligase beta subunit family. As to quaternary structure, heterotetramer of two alpha and two beta subunits. Requires Mg(2+) as cofactor.

The enzyme catalyses succinate + ATP + CoA = succinyl-CoA + ADP + phosphate. It catalyses the reaction GTP + succinate + CoA = succinyl-CoA + GDP + phosphate. It functions in the pathway carbohydrate metabolism; tricarboxylic acid cycle; succinate from succinyl-CoA (ligase route): step 1/1. Functionally, succinyl-CoA synthetase functions in the citric acid cycle (TCA), coupling the hydrolysis of succinyl-CoA to the synthesis of either ATP or GTP and thus represents the only step of substrate-level phosphorylation in the TCA. The beta subunit provides nucleotide specificity of the enzyme and binds the substrate succinate, while the binding sites for coenzyme A and phosphate are found in the alpha subunit. In Aliivibrio salmonicida (strain LFI1238) (Vibrio salmonicida (strain LFI1238)), this protein is Succinate--CoA ligase [ADP-forming] subunit beta.